We begin with the raw amino-acid sequence, 154 residues long: Protein X (154 aa).

The interval 68-117 (PCALRFTSARCMETTVNAHQILPKVLHKRTLGLPAMSTTDLEAYFKDCVF) is mitochondrial targeting sequence.

It belongs to the orthohepadnavirus protein X family. May form homodimer. May interact with host CEBPA, CFLAR, CREB1, DDB1, E4F1, HBXIP, HSPD1/HSP60, NFKBIA, POLR2E and SMAD4. Interacts with host SMC5-SMC6 complex and induces its degradation. Interacts with host TRPC4AP; leading to prevent ubiquitination of TRPC4AP. Interacts with host PLSCR1; this interaction promotes ubiquitination and degradation of HBx and impairs HBx-mediated cell proliferation. A fraction may be phosphorylated in insect cells and HepG2 cells, a human hepatoblastoma cell line. Phosphorylated in vitro by host protein kinase C or mitogen-activated protein kinase. N-acetylated in insect cells.

It localises to the host cytoplasm. It is found in the host nucleus. The protein resides in the host mitochondrion. Its function is as follows. Multifunctional protein that plays a role in silencing host antiviral defenses and promoting viral transcription. Does not seem to be essential for HBV infection. May be directly involved in development of cirrhosis and liver cancer (hepatocellular carcinoma). Most of cytosolic activities involve modulation of cytosolic calcium. The effect on apoptosis is controversial depending on the cell types in which the studies have been conducted. May induce apoptosis by localizing in mitochondria and causing loss of mitochondrial membrane potential. May also modulate apoptosis by binding host CFLAR, a key regulator of the death-inducing signaling complex (DISC). Promotes viral transcription by using the host E3 ubiquitin ligase DDB1 to target the SMC5-SMC6 complex to proteasomal degradation. This host complex would otherwise bind to viral episomal DNA, and prevents its transcription. Moderately stimulates transcription of many different viral and cellular transcription elements. Promoters and enhancers stimulated by HBx contain DNA binding sites for NF-kappa-B, AP-1, AP-2, c-EBP, ATF/CREB, or the calcium-activated factor NF-AT. This is Protein X from Homo sapiens (Human).